The chain runs to 78 residues: Acyl carrier protein AcpP (78 aa).

A Carrier domain is found at 2-77; the sequence is SDTAERVKKI…DAVKYIDKAS (76 aa). Serine 37 is modified (O-(pantetheine 4'-phosphoryl)serine).

The protein belongs to the acyl carrier protein (ACP) family. 4'-phosphopantetheine is transferred from CoA to a specific serine of apo-ACP by AcpS. This modification is essential for activity because fatty acids are bound in thioester linkage to the sulfhydryl of the prosthetic group.

The protein resides in the cytoplasm. The protein operates within lipid metabolism; fatty acid biosynthesis. Its function is as follows. Carrier of the growing fatty acid chain in fatty acid biosynthesis. This Mesorhizobium japonicum (strain LMG 29417 / CECT 9101 / MAFF 303099) (Mesorhizobium loti (strain MAFF 303099)) protein is Acyl carrier protein AcpP.